Consider the following 233-residue polypeptide: H-2 class II histocompatibility antigen, A-S alpha chain (233 aa).

Residues 1–88 (EDDIEADHVG…KRSNSTPATN (88 aa)) are alpha-1. The Extracellular portion of the chain corresponds to 1 to 195 (EDDIEADHVG…IPAPMSELTE (195 aa)). The tract at residues 89–182 (EAPQATVFPK…GLEEPVLKHW (94 aa)) is alpha-2. Residues 91–183 (PQATVFPKSP…LEEPVLKHWE (93 aa)) enclose the Ig-like C1-type domain. The cysteines at positions 111 and 167 are disulfide-linked. Asparagine 122 carries an N-linked (GlcNAc...) asparagine glycan. The interval 183–195 (EPEIPAPMSELTE) is connecting peptide. A helical membrane pass occupies residues 196–221 (TVVCALGLSVGLVGIVVGTIFIIQGL). The Cytoplasmic segment spans residues 222–233 (RSGGTSRHPGPL).

Belongs to the MHC class II family.

It is found in the membrane. The chain is H-2 class II histocompatibility antigen, A-S alpha chain (H2-Aa) from Mus musculus (Mouse).